The primary structure comprises 590 residues: Plasmepsin V (590 aa).

Residues 1 to 544 (MNNYFLRKEN…EKENIFLKVS (544 aa)) are Lumenal-facing. Positions 33-81 (CNNVENKIDNVGKKIENVGKKIGDMENKNDNVENKNDNVGNKNDNVKNA) form a coiled coil. A Peptidase A1 domain is found at 100-514 (YFLDIDIGKP…DLQQNQIAFI (415 aa)). Asp118 is a catalytic residue. 7 disulfide bridges follow: Cys128–Cys211, Cys131–Cys134, Cys155–Cys166, Cys160–Cys171, Cys259–Cys518, Cys389–Cys434, and Cys443–Cys479. The span at 282–291 (KEKQKMDKSD) shows a compositional bias: basic and acidic residues. The segment at 282 to 316 (KEKQKMDKSDNNSSNKGNVSIKLKNNDKNDDEENN) is disordered. Residues 292-304 (NNSSNKGNVSIKL) are compositionally biased toward low complexity. Asp365 is an active-site residue. The helical transmembrane segment at 545-565 (YINLYCLWLLLALTILLSLIL) threads the bilayer. The Cytoplasmic segment spans residues 566-590 (YVRKMFYMDYFPLSDQNKSPIQEST).

The protein belongs to the peptidase A1 family. Component of a complex composed of SPC25 and PMV; the interaction is mediated via the transmembrane domains. The complex interacts with the SEC61 channel-forming translocon complex and is involved in the recognition and import of PEXEL motif-containing proteins into the ER for subsequent export. It is not clear if the zymogen has a cleavable propeptide. In vitro, appears to be cleaved between Asn-80 and Ala-81. Cleavage of the putative propeptide is dispensable for catalytic activity.

It is found in the endoplasmic reticulum membrane. Inhibited by peptidomimetic inhibitor WEHI-842. Inhibited by Cu(2+) and Hg(2+). During the asexual blood stage, plays an essential role in the export of several proteins into the host erythrocytes by cleaving the pentameric localization motif RxLxE/Q/D (termed Plasmodium export element (PEXEL)) located downstream of the N-terminal secretory signal sequence. Specifically, cleaves after the leucine residue in the RxLxE/Q/D (or RxLxxE) motif of exported proteins including RESA, EMP2, EMP3, KAHRP, RIF/Rifin and STEVOR. Also, by regulating protein export, plays an essential role in gametocyte development and thus, parasite transmission to the mosquito vector. This is Plasmepsin V from Plasmodium falciparum (isolate 3D7).